The following is a 639-amino-acid chain: Sec1 family domain-containing protein 1 (639 aa).

Phosphoserine occurs at positions 34, 300, and 525.

Belongs to the STXBP/unc-18/SEC1 family. As to quaternary structure, interacts with STX17. Interacts with STX5A. Interacts with the COG complex via COG4.

Its subcellular location is the cytoplasm. The protein resides in the endoplasmic reticulum membrane. It is found in the golgi apparatus. It localises to the golgi stack membrane. Plays a role in SNARE-pin assembly and Golgi-to-ER retrograde transport via its interaction with COG4. Involved in vesicular transport between the endoplasmic reticulum and the Golgi. The protein is Sec1 family domain-containing protein 1 (Scfd1) of Mus musculus (Mouse).